The following is a 161-amino-acid chain: Putative 4-hydroxy-4-methyl-2-oxoglutarate aldolase (161 aa).

Residues Gly78–Ile81 and Arg100 contribute to the substrate site. Residue Asp101 participates in a divalent metal cation binding.

This sequence belongs to the class II aldolase/RraA-like family. As to quaternary structure, homotrimer. Requires a divalent metal cation as cofactor.

The enzyme catalyses 4-hydroxy-4-methyl-2-oxoglutarate = 2 pyruvate. It carries out the reaction oxaloacetate + H(+) = pyruvate + CO2. Functionally, catalyzes the aldol cleavage of 4-hydroxy-4-methyl-2-oxoglutarate (HMG) into 2 molecules of pyruvate. Also contains a secondary oxaloacetate (OAA) decarboxylase activity due to the common pyruvate enolate transition state formed following C-C bond cleavage in the retro-aldol and decarboxylation reactions. In Mycobacterium avium (strain 104), this protein is Putative 4-hydroxy-4-methyl-2-oxoglutarate aldolase.